The following is a 120-amino-acid chain: uncharacterized protein (120 aa).

The chain crosses the membrane as a helical span at residues 22-44 (ITVASCIGAAQGALFSIASALLL). Asn-114 carries an N-linked (GlcNAc...) asparagine glycan.

It is found in the membrane. This is an uncharacterized protein from Saccharomyces cerevisiae (strain ATCC 204508 / S288c) (Baker's yeast).